We begin with the raw amino-acid sequence, 482 residues long: DNA-directed RNA polymerase I subunit RPA49 (482 aa).

Ser226 carries the phosphoserine modification. N6-acetyllysine is present on Lys436. Residues 460-482 are disordered; the sequence is GTLSVPLPPAQNSDRQSKRRKMN.

It belongs to the eukaryotic RPA49/POLR1E RNA polymerase subunit family. Component of the RNA polymerase I (Pol I) complex consisting of 13 subunits: a ten-subunit catalytic core composed of POLR1A/RPA1, POLR1B/RPA2, POLR1C/RPAC1, POLR1D/RPAC2, POLR1H/RPA12, POLR2E/RPABC1, POLR2F/RPABC2, POLR2H/RPABC3, POLR2K/RPABC4 and POLR2L/RPABC5; a mobile stalk subunit POLR1F/RPA43 protruding from the core and additional subunits homologous to general transcription factors POLR1E/RPA49 and POLR1G/RPA34. Forms a heterodimer with POLR1G/RPA34. Interacts with POLR1G. Also binds UBTF/UBF. Interacts with PWP1. Post-translationally, acetylated at Lys-436 by CREBBP/CBP, leading to decreased RNA polymerase I transcription. In normal conditions, deacetylated by SIRT7, promoting the association of RNA polymerase I with the rDNA promoter region and coding region. In response to stress, SIRT7 is released from nucleoli leading to hyperacetylation of POLR1E/PAF53 and decreased association of RNA polymerase I with the rDNA promoter region.

The protein localises to the nucleus. It is found in the nucleolus. In terms of biological role, component of RNA polymerase I (Pol I), a DNA-dependent RNA polymerase which synthesizes ribosomal RNA precursors using the four ribonucleoside triphosphates as substrates. Appears to be involved in the formation of the initiation complex at the promoter by mediating the interaction between Pol I and UBTF/UBF. The sequence is that of DNA-directed RNA polymerase I subunit RPA49 (Polr1e) from Mus musculus (Mouse).